The sequence spans 273 residues: Peptidoglycan-N-acetylglucosamine deacetylase BC_1974 (273 aa).

A helical transmembrane segment spans residues 10 to 30 (IVVVLIAIAAVAIGYYMFQSI). One can recognise a NodB homology domain in the interval 69-255 (KVAYLTFDDG…GLKEKGYEFE (187 aa)). The active-site Proton acceptor is aspartate 76. Zn(2+)-binding residues include aspartate 77, histidine 126, and histidine 130. Histidine 230 acts as the Proton donor in catalysis.

It belongs to the polysaccharide deacetylase family. Zn(2+) is required as a cofactor. The cofactor is Co(2+). Requires Ni(2+) as cofactor.

It localises to the cell membrane. The enzyme catalyses peptidoglycan-N-acetyl-D-glucosamine + H2O = peptidoglycan-D-glucosamine + acetate.. Its activity is regulated as follows. Inhibited by the hydroxamate N-hydroxy-4-(naphthalene-1-yl)benzamide (NHNB). Its function is as follows. Catalyzes the deacetylation of N-acetylglucosamine (GlcNAc) residues in peptidoglycan. This Bacillus cereus (strain ATCC 14579 / DSM 31 / CCUG 7414 / JCM 2152 / NBRC 15305 / NCIMB 9373 / NCTC 2599 / NRRL B-3711) protein is Peptidoglycan-N-acetylglucosamine deacetylase BC_1974.